Consider the following 488-residue polypeptide: Transmembrane protein 39A (488 aa).

2 N-linked (GlcNAc...) asparagine glycosylation sites follow: Asn-31 and Asn-39. Transmembrane regions (helical) follow at residues Gly-72–Ile-92, Thr-110–Ala-130, and Leu-155–Val-175. Asn-180 carries an N-linked (GlcNAc...) asparagine glycan. 5 consecutive transmembrane segments (helical) span residues Ser-182–Phe-202, Glu-287–Val-307, Cys-319–Pro-339, Leu-420–Leu-440, and Asn-446–Leu-466.

Belongs to the TMEM39 family.

The protein localises to the endoplasmic reticulum membrane. Regulates autophagy by controlling the spatial distribution and levels of the intracellular phosphatidylinositol 4-phosphate (PtdIns(4)P) pools. Modulates (PtdIns(4)P) levels by regulating the ER-to-Golgi trafficking of the phosphatidylinositide phosphatase SACM1L. This Xenopus tropicalis (Western clawed frog) protein is Transmembrane protein 39A (tmem39a).